Reading from the N-terminus, the 209-residue chain is Putative cardiolipin synthase (209 aa).

4 consecutive transmembrane segments (helical) span residues 27–47, 82–102, 126–146, and 157–177; these read AFVY…ILVF, VTVP…VLTL, VTYV…TILL, and LLAC…WAFV.

The protein belongs to the CDP-alcohol phosphatidyltransferase class-I family.

The protein localises to the cell membrane. The catalysed reaction is a CDP-1,2-diacyl-sn-glycerol + a 1,2-diacyl-sn-glycero-3-phospho-(1'-sn-glycerol) = a cardiolipin + CMP + H(+). Its pathway is lipid metabolism; phospholipid metabolism. In terms of biological role, may catalyze the biosynthesis of cardiolipin from phosphatidylglycerol (PG) and CDP-diacylglycerol. The sequence is that of Putative cardiolipin synthase from Mycobacterium bovis (strain ATCC BAA-935 / AF2122/97).